We begin with the raw amino-acid sequence, 249 residues long: Enolase-phosphatase E1 (249 aa).

Mg(2+) is bound by residues Asp14 and Glu16. Residues 141–142 (SS) and Lys175 contribute to the substrate site. Asp200 serves as a coordination point for Mg(2+).

The protein belongs to the HAD-like hydrolase superfamily. MasA/MtnC family. In terms of assembly, monomer. Requires Mg(2+) as cofactor.

It localises to the cytoplasm. It is found in the nucleus. The enzyme catalyses 5-methylsulfanyl-2,3-dioxopentyl phosphate + H2O = 1,2-dihydroxy-5-(methylsulfanyl)pent-1-en-3-one + phosphate. The protein operates within amino-acid biosynthesis; L-methionine biosynthesis via salvage pathway; L-methionine from S-methyl-5-thio-alpha-D-ribose 1-phosphate: step 3/6. Its pathway is amino-acid biosynthesis; L-methionine biosynthesis via salvage pathway; L-methionine from S-methyl-5-thio-alpha-D-ribose 1-phosphate: step 4/6. Its function is as follows. Bifunctional enzyme that catalyzes the enolization of 2,3-diketo-5-methylthiopentyl-1-phosphate (DK-MTP-1-P) into the intermediate 2-hydroxy-3-keto-5-methylthiopentenyl-1-phosphate (HK-MTPenyl-1-P), which is then dephosphorylated to form the acireductone 1,2-dihydroxy-3-keto-5-methylthiopentene (DHK-MTPene). The chain is Enolase-phosphatase E1 from Drosophila mojavensis (Fruit fly).